A 402-amino-acid chain; its full sequence is Tryptophan--tRNA ligase, cytoplasmic (402 aa).

Residues 97 to 106 carry the 'HIGH' region motif; that stretch reads PSSEALHLGH. The 'KMSKS' region motif lies at 280–284; the sequence is KMSAS.

The protein belongs to the class-I aminoacyl-tRNA synthetase family.

It localises to the cytoplasm. The protein localises to the cytosol. It catalyses the reaction tRNA(Trp) + L-tryptophan + ATP = L-tryptophyl-tRNA(Trp) + AMP + diphosphate + H(+). The polypeptide is Tryptophan--tRNA ligase, cytoplasmic (Arabidopsis thaliana (Mouse-ear cress)).